The chain runs to 237 residues: MALRKNRGSRMQRNVIAMTEPKSLNSEQYRTIRTNIEFASVDRQMKSVMITSACPGEGKSTTAANLAVVFAQQGKKVLLIDADLRKPTVHTAFFLENTVGLTSVLLKKSSMEQAVQASNEKHLDVLTSGPIPPNPAELLSSKWMKELAYEACAAYDMVIFDTPPILAVADAQILGNVADGSVLVISSGKTEKEQAAKAKEALATCKSKLLGAIMNGKKLSKHSEYGYYGTKDNFMQK.

At Tyr-228 the chain carries Phosphotyrosine; by autocatalysis.

The protein belongs to the CpsD/CapB family. Post-translationally, autophosphorylated in vitro, which inhibits ATPase activity. Dephosphorylated by YwqE in vitro.

It catalyses the reaction L-tyrosyl-[protein] + ATP = O-phospho-L-tyrosyl-[protein] + ADP + H(+). In terms of biological role, may be involved in the regulation of capsular polysaccharide biosynthesis. Autophosphorylates in vitro. Phosphorylates and activates in vitro two UDP-glucose dehydrogenases, YwqF and TuaD, as well as the DNA-binding proteins Ssb and SsbB. The polypeptide is Tyrosine-protein kinase YwqD (ywqD) (Bacillus subtilis (strain 168)).